Here is a 238-residue protein sequence, read N- to C-terminus: Probable rhamnogalacturonate lyase B (238 aa).

The first 19 residues, 1–19, serve as a signal peptide directing secretion; sequence MRLRTSLGVASACASVASA. Asn27, Asn110, and Asn143 each carry an N-linked (GlcNAc...) asparagine glycan.

Belongs to the polysaccharide lyase 4 family.

The protein resides in the secreted. It carries out the reaction Endotype eliminative cleavage of L-alpha-rhamnopyranosyl-(1-&gt;4)-alpha-D-galactopyranosyluronic acid bonds of rhamnogalacturonan I domains in ramified hairy regions of pectin leaving L-rhamnopyranose at the reducing end and 4-deoxy-4,5-unsaturated D-galactopyranosyluronic acid at the non-reducing end.. Functionally, pectinolytic enzymes consist of four classes of enzymes: pectin lyase, polygalacturonase, pectin methylesterase and rhamnogalacturonase. Degrades the rhamnogalacturonan I (RG-I) backbone of pectin. The protein is Probable rhamnogalacturonate lyase B (rglB) of Aspergillus oryzae (strain ATCC 42149 / RIB 40) (Yellow koji mold).